Consider the following 251-residue polypeptide: Ditrans,polycis-undecaprenyl-diphosphate synthase ((2E,6E)-farnesyl-diphosphate specific) (251 aa).

Aspartate 20 is a catalytic residue. Aspartate 20 contacts Mg(2+). Residues 21-24 (GNGR), tryptophan 25, arginine 33, histidine 37, and 65-67 (SSE) contribute to the substrate site. Asparagine 68 serves as the catalytic Proton acceptor. Residues tryptophan 69, arginine 71, arginine 188, and 194–196 (RIS) each bind substrate. Mg(2+) is bound at residue glutamate 207.

Belongs to the UPP synthase family. As to quaternary structure, homodimer. Mg(2+) is required as a cofactor.

The catalysed reaction is 8 isopentenyl diphosphate + (2E,6E)-farnesyl diphosphate = di-trans,octa-cis-undecaprenyl diphosphate + 8 diphosphate. Catalyzes the sequential condensation of isopentenyl diphosphate (IPP) with (2E,6E)-farnesyl diphosphate (E,E-FPP) to yield (2Z,6Z,10Z,14Z,18Z,22Z,26Z,30Z,34E,38E)-undecaprenyl diphosphate (di-trans,octa-cis-UPP). UPP is the precursor of glycosyl carrier lipid in the biosynthesis of bacterial cell wall polysaccharide components such as peptidoglycan and lipopolysaccharide. This chain is Ditrans,polycis-undecaprenyl-diphosphate synthase ((2E,6E)-farnesyl-diphosphate specific), found in Vibrio parahaemolyticus serotype O3:K6 (strain RIMD 2210633).